The following is a 245-amino-acid chain: tRNA1(Val) (adenine(37)-N6)-methyltransferase (245 aa).

It belongs to the methyltransferase superfamily. tRNA (adenine-N(6)-)-methyltransferase family.

Its subcellular location is the cytoplasm. The enzyme catalyses adenosine(37) in tRNA1(Val) + S-adenosyl-L-methionine = N(6)-methyladenosine(37) in tRNA1(Val) + S-adenosyl-L-homocysteine + H(+). Its function is as follows. Specifically methylates the adenine in position 37 of tRNA(1)(Val) (anticodon cmo5UAC). The chain is tRNA1(Val) (adenine(37)-N6)-methyltransferase from Klebsiella pneumoniae (strain 342).